An 813-amino-acid chain; its full sequence is ATP-dependent zinc metalloprotease FTSH 10, mitochondrial (813 aa).

The transit peptide at 1-86 directs the protein to the mitochondrion; sequence MIFSKLGSSL…FANPRLRRFF (86 aa). A disordered region spans residues 93–129; the sequence is KKNYENYYPKDSKKAPKNEQKSESRDGSKKNENENAG. Residues 94–125 show a composition bias toward basic and acidic residues; the sequence is KNYENYYPKDSKKAPKNEQKSESRDGSKKNEN. A helical membrane pass occupies residues 139-157; the sequence is MLIPLMAIALILSTFSLGS. ATP is bound at residue 367–374; the sequence is GPPGTGKT. A Zn(2+)-binding site is contributed by histidine 592. Glutamate 593 is a catalytic residue. Zn(2+) contacts are provided by histidine 596 and aspartate 668. Residues 764-790 are compositionally biased toward basic and acidic residues; it reads RPFKSGETTNYDRFKSGFEESEKESQK. The tract at residues 764–813 is disordered; sequence RPFKSGETTNYDRFKSGFEESEKESQKESVPVKPVEDDGIPPLEPQVVPT.

This sequence in the N-terminal section; belongs to the AAA ATPase family. In the C-terminal section; belongs to the peptidase M41 family. Zn(2+) is required as a cofactor.

It is found in the mitochondrion inner membrane. Probable ATP-dependent zinc metallopeptidase. Involved in the assembly and/or stability of the complexes I and V of the mitochondrial oxidative phosphorylation system. The sequence is that of ATP-dependent zinc metalloprotease FTSH 10, mitochondrial (FTSH10) from Arabidopsis thaliana (Mouse-ear cress).